The following is a 165-amino-acid chain: RNA pyrophosphohydrolase (165 aa).

One can recognise a Nudix hydrolase domain in the interval 6–149 (GYRPNVGIII…KQSVYHQALT (144 aa)). The short motif at 38–59 (GGVRENETPQQAVFRELKEEVG) is the Nudix box element.

The protein belongs to the Nudix hydrolase family. RppH subfamily. Requires a divalent metal cation as cofactor.

In terms of biological role, accelerates the degradation of transcripts by removing pyrophosphate from the 5'-end of triphosphorylated RNA, leading to a more labile monophosphorylated state that can stimulate subsequent ribonuclease cleavage. This is RNA pyrophosphohydrolase from Hydrogenovibrio crunogenus (strain DSM 25203 / XCL-2) (Thiomicrospira crunogena).